The primary structure comprises 771 residues: DNA polymerase 1 (771 aa).

It belongs to the DNA polymerase type-B family.

The catalysed reaction is DNA(n) + a 2'-deoxyribonucleoside 5'-triphosphate = DNA(n+1) + diphosphate. The sequence is that of DNA polymerase 1 (polI) from Pyrococcus abyssi.